The following is a 226-amino-acid chain: MAEDDKVFRRARERLVERLKSLGYIRSNRVAEAMLKVPRHEFVPEDLRDRAYVDSPLPIGRGQTISAPHMVAIMTELLDPRPGHKVLEVGAGSGYHAAVVAELVKPDGRVITVERIPELADFARNNLKKTGYDRFVKVLVGDGTKGYPPEAPYDRILVTAGAPDVPESLLEQLKPGGKMVIPVGDRHMQELWLVEKTEDGEIRRRRHGGCAFVPLIGEEGFQEPES.

S66 is an active-site residue.

The protein belongs to the methyltransferase superfamily. L-isoaspartyl/D-aspartyl protein methyltransferase family.

The protein localises to the cytoplasm. The enzyme catalyses [protein]-L-isoaspartate + S-adenosyl-L-methionine = [protein]-L-isoaspartate alpha-methyl ester + S-adenosyl-L-homocysteine. In terms of biological role, catalyzes the methyl esterification of L-isoaspartyl residues in peptides and proteins that result from spontaneous decomposition of normal L-aspartyl and L-asparaginyl residues. It plays a role in the repair and/or degradation of damaged proteins. The polypeptide is Protein-L-isoaspartate O-methyltransferase (Methanopyrus kandleri (strain AV19 / DSM 6324 / JCM 9639 / NBRC 100938)).